The sequence spans 458 residues: tRNA modification GTPase MnmE (458 aa).

3 residues coordinate (6S)-5-formyl-5,6,7,8-tetrahydrofolate: R32, E89, and K128. In terms of domain architecture, TrmE-type G spans 224–381; that stretch reads GVRVVLAGRP…LCQRLKECAG (158 aa). N234 lines the K(+) pocket. Residues 234–239, 253–259, and 278–281 each bind GTP; these read NVGKSS, TDVPGTT, and DTAG. Residue S238 coordinates Mg(2+). T253, V255, and T258 together coordinate K(+). T259 is a binding site for Mg(2+). K458 lines the (6S)-5-formyl-5,6,7,8-tetrahydrofolate pocket.

It belongs to the TRAFAC class TrmE-Era-EngA-EngB-Septin-like GTPase superfamily. TrmE GTPase family. Homodimer. Heterotetramer of two MnmE and two MnmG subunits. K(+) serves as cofactor.

It localises to the cytoplasm. In terms of biological role, exhibits a very high intrinsic GTPase hydrolysis rate. Involved in the addition of a carboxymethylaminomethyl (cmnm) group at the wobble position (U34) of certain tRNAs, forming tRNA-cmnm(5)s(2)U34. This is tRNA modification GTPase MnmE from Nitrosococcus oceani (strain ATCC 19707 / BCRC 17464 / JCM 30415 / NCIMB 11848 / C-107).